The chain runs to 297 residues: Rhomboid-type serine protease 2 (297 aa).

Helical transmembrane passes span 14 to 34 (IQHP…IFLL), 60 to 80 (ISFY…LVAL), 98 to 118 (IVLN…SIGF), 120 to 140 (PDEA…YWAI), 155 to 175 (LVVP…IVIP), and 179 to 199 (FIGH…YLDV). Catalysis depends on S128, which acts as the Nucleophile. Residue H182 is part of the active site. A disordered region spans residues 268–297 (DLEAGTRSRGNSSVDPTTSFPGTGQTLGTQ). Residues 275-297 (SRGNSSVDPTTSFPGTGQTLGTQ) are compositionally biased toward polar residues.

Belongs to the peptidase S54 family.

It localises to the golgi apparatus membrane. The protein resides in the golgi apparatus. Its subcellular location is the cis-Golgi network membrane. It carries out the reaction Cleaves type-1 transmembrane domains using a catalytic dyad composed of serine and histidine that are contributed by different transmembrane domains.. Functionally, probable rhomboid-type serine protease that catalyzes intramembrane proteolysis. This Yarrowia lipolytica (strain CLIB 122 / E 150) (Yeast) protein is Rhomboid-type serine protease 2 (RBD2).